The chain runs to 168 residues: Photosystem I assembly protein Ycf3 (168 aa).

3 TPR repeats span residues A35 to P68, S72 to L105, and G120 to N153.

Belongs to the Ycf3 family.

The protein resides in the plastid. It is found in the chloroplast thylakoid membrane. Essential for the assembly of the photosystem I (PSI) complex. May act as a chaperone-like factor to guide the assembly of the PSI subunits. The protein is Photosystem I assembly protein Ycf3 of Illicium oligandrum (Star anise).